The sequence spans 78 residues: Small ribosomal subunit protein bS18B (78 aa).

The tract at residues 1-22 is disordered; that stretch reads MPRKPVRKVASTPRPNPLDQNG.

It belongs to the bacterial ribosomal protein bS18 family. In terms of assembly, part of the 30S ribosomal subunit. Forms a tight heterodimer with protein bS6.

Its function is as follows. Binds as a heterodimer with protein bS6 to the central domain of the 16S rRNA, where it helps stabilize the platform of the 30S subunit. The sequence is that of Small ribosomal subunit protein bS18B from Streptomyces avermitilis (strain ATCC 31267 / DSM 46492 / JCM 5070 / NBRC 14893 / NCIMB 12804 / NRRL 8165 / MA-4680).